The following is a 1066-amino-acid chain: Isoleucine--tRNA ligase (1066 aa).

The 'HIGH' region signature appears at 49–59 (PYVSGAIHLGT). Residues 625-629 (KMSKS) carry the 'KMSKS' region motif. Position 628 (Lys628) interacts with ATP.

Belongs to the class-I aminoacyl-tRNA synthetase family. IleS type 2 subfamily. Monomer. Zn(2+) serves as cofactor.

The protein localises to the cytoplasm. The catalysed reaction is tRNA(Ile) + L-isoleucine + ATP = L-isoleucyl-tRNA(Ile) + AMP + diphosphate. Catalyzes the attachment of isoleucine to tRNA(Ile). As IleRS can inadvertently accommodate and process structurally similar amino acids such as valine, to avoid such errors it has two additional distinct tRNA(Ile)-dependent editing activities. One activity is designated as 'pretransfer' editing and involves the hydrolysis of activated Val-AMP. The other activity is designated 'posttransfer' editing and involves deacylation of mischarged Val-tRNA(Ile). This Pyrococcus furiosus (strain ATCC 43587 / DSM 3638 / JCM 8422 / Vc1) protein is Isoleucine--tRNA ligase.